Consider the following 118-residue polypeptide: Ribosome-binding factor A (118 aa).

It belongs to the RbfA family. As to quaternary structure, monomer. Binds 30S ribosomal subunits, but not 50S ribosomal subunits or 70S ribosomes.

The protein resides in the cytoplasm. Its function is as follows. One of several proteins that assist in the late maturation steps of the functional core of the 30S ribosomal subunit. Associates with free 30S ribosomal subunits (but not with 30S subunits that are part of 70S ribosomes or polysomes). Required for efficient processing of 16S rRNA. May interact with the 5'-terminal helix region of 16S rRNA. This is Ribosome-binding factor A from Bacillus cereus (strain B4264).